A 355-amino-acid polypeptide reads, in one-letter code: DNA-directed RNA polymerase subunit alpha (355 aa).

Positions 1–233 are alpha N-terminal domain (alpha-NTD); it reads MVREKVRVST…DLFIPFLHKE (233 aa). The segment at 268–355 is alpha C-terminal domain (alpha-CTD); the sequence is KKKIALKSIF…EIYCYSIFFH (88 aa).

The protein belongs to the RNA polymerase alpha chain family. In plastids the minimal PEP RNA polymerase catalytic core is composed of four subunits: alpha, beta, beta', and beta''. When a (nuclear-encoded) sigma factor is associated with the core the holoenzyme is formed, which can initiate transcription.

Its subcellular location is the plastid. The protein localises to the chloroplast. It catalyses the reaction RNA(n) + a ribonucleoside 5'-triphosphate = RNA(n+1) + diphosphate. DNA-dependent RNA polymerase catalyzes the transcription of DNA into RNA using the four ribonucleoside triphosphates as substrates. The polypeptide is DNA-directed RNA polymerase subunit alpha (Jasminum nudiflorum (Winter jasmine)).